A 251-amino-acid polypeptide reads, in one-letter code: GTP cyclohydrolase 1 type 2 homolog (251 aa).

Residues His62, His63, Asp103, His215, and Glu219 each coordinate a divalent metal cation.

Belongs to the GTP cyclohydrolase I type 2/NIF3 family. Homohexamer.

In Mycoplasmopsis pulmonis (strain UAB CTIP) (Mycoplasma pulmonis), this protein is GTP cyclohydrolase 1 type 2 homolog.